Here is a 37-residue protein sequence, read N- to C-terminus: Large ribosomal subunit protein bL36 (37 aa).

The protein belongs to the bacterial ribosomal protein bL36 family.

The polypeptide is Large ribosomal subunit protein bL36 (Pelotomaculum thermopropionicum (strain DSM 13744 / JCM 10971 / SI)).